The following is a 562-amino-acid chain: Potassium-transporting ATPase potassium-binding subunit (562 aa).

Helical transmembrane passes span 6-26, 62-82, 132-152, 175-195, 253-273, 283-303, 327-347, 356-376, 379-399, 416-436, 483-503, and 526-546; these read FLLI…LGGF, YALA…VLLM, GLTV…FALI, LYVL…QGVL, FVQM…FGQV, LIWA…YAEL, FGIL…CGAV, ALGG…FGGV, GLYG…LMIG, MTAL…ALAL, LLLA…VLAI, and LFIG…FIPA.

Belongs to the KdpA family. In terms of assembly, the system is composed of three essential subunits: KdpA, KdpB and KdpC.

The protein resides in the cell inner membrane. In terms of biological role, part of the high-affinity ATP-driven potassium transport (or Kdp) system, which catalyzes the hydrolysis of ATP coupled with the electrogenic transport of potassium into the cytoplasm. This subunit binds the periplasmic potassium ions and delivers the ions to the membrane domain of KdpB through an intramembrane tunnel. This Yersinia pseudotuberculosis serotype I (strain IP32953) protein is Potassium-transporting ATPase potassium-binding subunit.